Consider the following 355-residue polypeptide: UDP-N-acetylglucosamine--N-acetylmuramyl-(pentapeptide) pyrophosphoryl-undecaprenol N-acetylglucosamine transferase (355 aa).

UDP-N-acetyl-alpha-D-glucosamine-binding positions include 11 to 13 (TGG), Asn123, Arg162, Ser185, Ile239, 258 to 263 (ALTVSE), and Gln284.

Belongs to the glycosyltransferase 28 family. MurG subfamily.

Its subcellular location is the cell inner membrane. It carries out the reaction di-trans,octa-cis-undecaprenyl diphospho-N-acetyl-alpha-D-muramoyl-L-alanyl-D-glutamyl-meso-2,6-diaminopimeloyl-D-alanyl-D-alanine + UDP-N-acetyl-alpha-D-glucosamine = di-trans,octa-cis-undecaprenyl diphospho-[N-acetyl-alpha-D-glucosaminyl-(1-&gt;4)]-N-acetyl-alpha-D-muramoyl-L-alanyl-D-glutamyl-meso-2,6-diaminopimeloyl-D-alanyl-D-alanine + UDP + H(+). It participates in cell wall biogenesis; peptidoglycan biosynthesis. In terms of biological role, cell wall formation. Catalyzes the transfer of a GlcNAc subunit on undecaprenyl-pyrophosphoryl-MurNAc-pentapeptide (lipid intermediate I) to form undecaprenyl-pyrophosphoryl-MurNAc-(pentapeptide)GlcNAc (lipid intermediate II). The polypeptide is UDP-N-acetylglucosamine--N-acetylmuramyl-(pentapeptide) pyrophosphoryl-undecaprenol N-acetylglucosamine transferase (Hydrogenovibrio crunogenus (strain DSM 25203 / XCL-2) (Thiomicrospira crunogena)).